Reading from the N-terminus, the 702-residue chain is Elongation factor G 2 (702 aa).

One can recognise a tr-type G domain in the interval 8 to 291 (ELYRNIGIVA…AVIDYLPAPS (284 aa)). Residues 17 to 24 (AHVDAGKT), 89 to 93 (DTPGH), and 143 to 146 (NKMD) each bind GTP. The segment at 293–314 (IPAIRGTDPDDEEKHDERHADD) is disordered.

The protein belongs to the TRAFAC class translation factor GTPase superfamily. Classic translation factor GTPase family. EF-G/EF-2 subfamily.

The protein localises to the cytoplasm. Catalyzes the GTP-dependent ribosomal translocation step during translation elongation. During this step, the ribosome changes from the pre-translocational (PRE) to the post-translocational (POST) state as the newly formed A-site-bound peptidyl-tRNA and P-site-bound deacylated tRNA move to the P and E sites, respectively. Catalyzes the coordinated movement of the two tRNA molecules, the mRNA and conformational changes in the ribosome. This is Elongation factor G 2 (fusB) from Pseudomonas aeruginosa (strain ATCC 15692 / DSM 22644 / CIP 104116 / JCM 14847 / LMG 12228 / 1C / PRS 101 / PAO1).